The sequence spans 346 residues: Fe(3+) ions import ATP-binding protein FbpC 2 (346 aa).

The ABC transporter domain occupies 2–234 (LELHRVSKSF…PNSEDIATFL (233 aa)). ATP is bound at residue 34 to 41 (GPSGSGKT).

The protein belongs to the ABC transporter superfamily. Fe(3+) ion importer (TC 3.A.1.10) family. The complex is composed of two ATP-binding proteins (FbpC), two transmembrane proteins (FbpB) and a solute-binding protein (FbpA).

It is found in the cell inner membrane. It carries out the reaction Fe(3+)(out) + ATP + H2O = Fe(3+)(in) + ADP + phosphate + H(+). Part of the ABC transporter complex FbpABC involved in Fe(3+) ions import. Responsible for energy coupling to the transport system. This is Fe(3+) ions import ATP-binding protein FbpC 2 from Pectobacterium atrosepticum (strain SCRI 1043 / ATCC BAA-672) (Erwinia carotovora subsp. atroseptica).